We begin with the raw amino-acid sequence, 121 residues long: UPF0102 protein DSY2577 (121 aa).

The protein belongs to the UPF0102 family.

In Desulfitobacterium hafniense (strain Y51), this protein is UPF0102 protein DSY2577.